A 234-amino-acid chain; its full sequence is Exotoxin type G (234 aa).

The N-terminal stretch at 1–24 (MKTNILTIIILSCVFSYGSQLAYA) is a signal peptide.

It belongs to the staphylococcal/streptococcal toxin family.

Its function is as follows. Mitogenic for human peripheral blood lymphocytes. This Streptococcus pyogenes serotype M1 protein is Exotoxin type G (speG).